The primary structure comprises 845 residues: uncharacterized protein (845 aa).

Disordered stretches follow at residues 17–37 and 550–573; these read RRKQ…NDQP and AATE…NESL. Residues 622–707 adopt a coiled-coil conformation; the sequence is LSEQRFEREN…ELKKSNEHTR (86 aa).

This is an uncharacterized protein from Saccharum officinarum (Sugarcane).